A 149-amino-acid chain; its full sequence is NADH-quinone oxidoreductase subunit A (149 aa).

The next 3 helical transmembrane spans lie at 16-36 (FGIF…GAWF), 68-88 (FYLV…LFAW), and 98-118 (LGFI…VYLV).

It belongs to the complex I subunit 3 family. In terms of assembly, NDH-1 is composed of 13 different subunits. Subunits NuoA, H, J, K, L, M, N constitute the membrane sector of the complex.

The protein resides in the cell inner membrane. The catalysed reaction is a quinone + NADH + 5 H(+)(in) = a quinol + NAD(+) + 4 H(+)(out). In terms of biological role, NDH-1 shuttles electrons from NADH, via FMN and iron-sulfur (Fe-S) centers, to quinones in the respiratory chain. The immediate electron acceptor for the enzyme in this species is believed to be ubiquinone. Couples the redox reaction to proton translocation (for every two electrons transferred, four hydrogen ions are translocated across the cytoplasmic membrane), and thus conserves the redox energy in a proton gradient. The protein is NADH-quinone oxidoreductase subunit A of Cronobacter sakazakii (strain ATCC BAA-894) (Enterobacter sakazakii).